The primary structure comprises 85 residues: Large ribosomal subunit protein bL27 (85 aa).

Residues 1 to 22 are disordered; that stretch reads MAHKKAGGSTNNGRDSESKRLG.

This sequence belongs to the bacterial ribosomal protein bL27 family.

This Psychromonas ingrahamii (strain DSM 17664 / CCUG 51855 / 37) protein is Large ribosomal subunit protein bL27.